A 433-amino-acid polypeptide reads, in one-letter code: Pyrimidine-nucleoside phosphorylase (433 aa).

81-83 (KHS) is a phosphate binding site. K(+) contacts are provided by Gly88 and Thr90. Phosphate contacts are provided by residues Thr92, 108–110 (KMS), and Thr120. The substrate site is built by Arg168 and Lys187. Residues Leu243, Ala246, and Glu255 each coordinate K(+).

This sequence belongs to the thymidine/pyrimidine-nucleoside phosphorylase family. As to quaternary structure, homodimer. K(+) is required as a cofactor.

The enzyme catalyses uridine + phosphate = alpha-D-ribose 1-phosphate + uracil. The catalysed reaction is thymidine + phosphate = 2-deoxy-alpha-D-ribose 1-phosphate + thymine. It catalyses the reaction 2'-deoxyuridine + phosphate = 2-deoxy-alpha-D-ribose 1-phosphate + uracil. Catalyzes phosphorolysis of the pyrimidine nucleosides uridine, thymidine and 2'-deoxyuridine with the formation of the corresponding pyrimidine base and ribose-1-phosphate. This Staphylococcus aureus (strain Mu50 / ATCC 700699) protein is Pyrimidine-nucleoside phosphorylase (pdp).